Here is a 199-residue protein sequence, read N- to C-terminus: FMN-dependent NADH:quinone oxidoreductase 4 (199 aa).

FMN-binding positions include serine 10, 95–98 (MYNL), and 139–142 (SRGG).

The protein belongs to the azoreductase type 1 family. In terms of assembly, homodimer. The cofactor is FMN.

It catalyses the reaction 2 a quinone + NADH + H(+) = 2 a 1,4-benzosemiquinone + NAD(+). The catalysed reaction is N,N-dimethyl-1,4-phenylenediamine + anthranilate + 2 NAD(+) = 2-(4-dimethylaminophenyl)diazenylbenzoate + 2 NADH + 2 H(+). In terms of biological role, quinone reductase that provides resistance to thiol-specific stress caused by electrophilic quinones. Functionally, also exhibits azoreductase activity. Catalyzes the reductive cleavage of the azo bond in aromatic azo compounds to the corresponding amines. The chain is FMN-dependent NADH:quinone oxidoreductase 4 from Burkholderia lata (strain ATCC 17760 / DSM 23089 / LMG 22485 / NCIMB 9086 / R18194 / 383).